The sequence spans 158 residues: Transcriptional regulatory protein DoeX (158 aa).

Residues 3–64 (LDRYDLKILE…RLNTDVLVKR (62 aa)) form the HTH asnC-type domain. The H-T-H motif DNA-binding region spans 22–41 (KSKLAEAINLSVSPCWERVR).

It is found in the cytoplasm. Functionally, acts as a transcriptional regulator. It binds DNA specifically to a fragment from the doeA promoter region. This Halomonas elongata (strain ATCC 33173 / DSM 2581 / NBRC 15536 / NCIMB 2198 / 1H9) protein is Transcriptional regulatory protein DoeX (doeX).